The primary structure comprises 215 residues: Cytochrome b6 (215 aa).

Residues I32–F52 traverse the membrane as a helical segment. C35 provides a ligand contact to heme c. Heme b is bound by residues G37, R83, H86, H100, R103, and R114. A helical transmembrane segment spans residues A90–F110. Helical transmembrane passes span L116 to Y136 and L186 to I206. Heme b is bound by residues H187 and H202. The heme c site is built by R207 and I211. S212 serves as a coordination point for heme b.

Belongs to the cytochrome b family. PetB subfamily. The 4 large subunits of the cytochrome b6-f complex are cytochrome b6, subunit IV (17 kDa polypeptide, PetD), cytochrome f and the Rieske protein, while the 4 small subunits are PetG, PetL, PetM and PetN. The complex functions as a dimer. The cofactor is heme b. Heme c serves as cofactor. Post-translationally, the N-terminus is blocked.

It localises to the plastid. The protein localises to the chloroplast thylakoid membrane. Its function is as follows. Component of the cytochrome b6-f complex, which mediates electron transfer between photosystem II (PSII) and photosystem I (PSI), cyclic electron flow around PSI, and state transitions. This chain is Cytochrome b6, found in Chlamydomonas reinhardtii (Chlamydomonas smithii).